We begin with the raw amino-acid sequence, 401 residues long: Probable tRNA sulfurtransferase (401 aa).

One can recognise a THUMP domain in the interval 60–165; it reads EEICSLLKNI…EEATFLTIRN (106 aa). ATP-binding positions include 183-184, 208-209, arginine 265, glycine 287, and glutamine 296; these read ML and HF.

This sequence belongs to the ThiI family.

It is found in the cytoplasm. It carries out the reaction [ThiI sulfur-carrier protein]-S-sulfanyl-L-cysteine + a uridine in tRNA + 2 reduced [2Fe-2S]-[ferredoxin] + ATP + H(+) = [ThiI sulfur-carrier protein]-L-cysteine + a 4-thiouridine in tRNA + 2 oxidized [2Fe-2S]-[ferredoxin] + AMP + diphosphate. The catalysed reaction is [ThiS sulfur-carrier protein]-C-terminal Gly-Gly-AMP + S-sulfanyl-L-cysteinyl-[cysteine desulfurase] + AH2 = [ThiS sulfur-carrier protein]-C-terminal-Gly-aminoethanethioate + L-cysteinyl-[cysteine desulfurase] + A + AMP + 2 H(+). The protein operates within cofactor biosynthesis; thiamine diphosphate biosynthesis. Its function is as follows. Catalyzes the ATP-dependent transfer of a sulfur to tRNA to produce 4-thiouridine in position 8 of tRNAs, which functions as a near-UV photosensor. Also catalyzes the transfer of sulfur to the sulfur carrier protein ThiS, forming ThiS-thiocarboxylate. This is a step in the synthesis of thiazole, in the thiamine biosynthesis pathway. The sulfur is donated as persulfide by IscS. This chain is Probable tRNA sulfurtransferase, found in Bacillus velezensis (strain DSM 23117 / BGSC 10A6 / LMG 26770 / FZB42) (Bacillus amyloliquefaciens subsp. plantarum).